Here is a 283-residue protein sequence, read N- to C-terminus: Transcription factor bHLH104 (283 aa).

Positions 96 to 134 are disordered; it reads VEINSGSSGGAVKEEQEHLDDDCSRKRARTGSCSRGGGT. Over residues 107–120 the composition is skewed to basic and acidic residues; that stretch reads VKEEQEHLDDDCSR. A bHLH domain is found at 130-181; the sequence is RGGGTKACRERLRREKLNERFMDLSSVLEPGRTPKTDKPAILDDAIRILNQL.

As to quaternary structure, homodimer. Interacts with BTS and BHLH47/PYE.

Its subcellular location is the nucleus. In Arabidopsis thaliana (Mouse-ear cress), this protein is Transcription factor bHLH104 (BHLH104).